The chain runs to 376 residues: Arsenite methyltransferase (376 aa).

Residues Ser47 and Ser336 each carry the phosphoserine modification. Positions 354–363 are enriched in basic and acidic residues; the sequence is SDKMKPRHAP. A disordered region spans residues 354-376; the sequence is SDKMKPRHAPEGTGGCCGKRKNC.

This sequence belongs to the methyltransferase superfamily. Arsenite methyltransferase family.

It localises to the cytoplasm. It is found in the cytosol. The catalysed reaction is arsenic triglutathione + [thioredoxin]-dithiol + S-adenosyl-L-methionine + 2 H2O = methylarsonous acid + [thioredoxin]-disulfide + 3 glutathione + S-adenosyl-L-homocysteine + H(+). The enzyme catalyses arsenic triglutathione + 2 [thioredoxin]-dithiol + 2 S-adenosyl-L-methionine + H2O = dimethylarsinous acid + 2 [thioredoxin]-disulfide + 3 glutathione + 2 S-adenosyl-L-homocysteine + 2 H(+). It carries out the reaction arsenic triglutathione + 3 [thioredoxin]-dithiol + 3 S-adenosyl-L-methionine = trimethylarsine + 3 [thioredoxin]-disulfide + 3 glutathione + 3 S-adenosyl-L-homocysteine + 3 H(+). Catalyzes the transfer of a methyl group from AdoMet to trivalent arsenicals producing methylated and dimethylated arsenicals. It methylates arsenite to form methylarsonate, Me-AsO(3)H(2), which is reduced by methylarsonate reductase to methylarsonite, Me-As(OH)2. Methylarsonite is also a substrate and it is converted into the much less toxic compound dimethylarsinate (cacodylate), Me(2)As(O)-OH. The polypeptide is Arsenite methyltransferase (As3mt) (Mus musculus (Mouse)).